Here is a 199-residue protein sequence, read N- to C-terminus: Fe/S biogenesis protein NfuA (199 aa).

2 residues coordinate [4Fe-4S] cluster: Cys151 and Cys154.

The protein belongs to the NfuA family. As to quaternary structure, homodimer. [4Fe-4S] cluster serves as cofactor.

In terms of biological role, involved in iron-sulfur cluster biogenesis. Binds a 4Fe-4S cluster, can transfer this cluster to apoproteins, and thereby intervenes in the maturation of Fe/S proteins. Could also act as a scaffold/chaperone for damaged Fe/S proteins. The chain is Fe/S biogenesis protein NfuA from Xanthomonas axonopodis pv. citri (strain 306).